The primary structure comprises 247 residues: NADH dehydrogenase [ubiquinone] flavoprotein 2, mitochondrial (247 aa).

The transit peptide at methionine 1–histidine 40 directs the protein to the mitochondrion. Positions 135, 140, 176, and 180 each coordinate [2Fe-2S] cluster. The segment at asparagine 211 to leucine 247 is disordered.

Belongs to the complex I 24 kDa subunit family. In terms of assembly, complex I is composed of 45 different subunits. This is a component of the flavoprotein-sulfur (FP) fragment of the enzyme. It depends on [2Fe-2S] cluster as a cofactor.

Its subcellular location is the mitochondrion inner membrane. It catalyses the reaction a ubiquinone + NADH + 5 H(+)(in) = a ubiquinol + NAD(+) + 4 H(+)(out). Its function is as follows. Core subunit of the mitochondrial membrane respiratory chain NADH dehydrogenase (Complex I) that is believed to belong to the minimal assembly required for catalysis. Complex I functions in the transfer of electrons from NADH to the respiratory chain. The immediate electron acceptor for the enzyme is believed to be ubiquinone. This is NADH dehydrogenase [ubiquinone] flavoprotein 2, mitochondrial (ndufv2) from Dictyostelium discoideum (Social amoeba).